The sequence spans 434 residues: Anaerobic glycerol-3-phosphate dehydrogenase subunit B (434 aa).

The protein belongs to the anaerobic G-3-P dehydrogenase subunit B family. In terms of assembly, composed of a catalytic GlpA/B dimer and of membrane bound GlpC. It depends on FMN as a cofactor.

It catalyses the reaction a quinone + sn-glycerol 3-phosphate = dihydroxyacetone phosphate + a quinol. The protein operates within polyol metabolism; glycerol degradation via glycerol kinase pathway; glycerone phosphate from sn-glycerol 3-phosphate (anaerobic route): step 1/1. In terms of biological role, conversion of glycerol 3-phosphate to dihydroxyacetone. Uses fumarate or nitrate as electron acceptor. The chain is Anaerobic glycerol-3-phosphate dehydrogenase subunit B from Histophilus somni (strain 2336) (Haemophilus somnus).